Reading from the N-terminus, the 113-residue chain is uncharacterized protein (113 aa).

Transmembrane regions (helical) follow at residues 9 to 31 (IFPS…SVIY), 36 to 58 (VLTI…YKFQ), and 71 to 90 (IMAL…VVAV).

It is found in the cell membrane. This is an uncharacterized protein from Archaeoglobus fulgidus (strain ATCC 49558 / DSM 4304 / JCM 9628 / NBRC 100126 / VC-16).